A 226-amino-acid chain; its full sequence is Putative N-acetylmannosamine-6-phosphate 2-epimerase (226 aa).

The protein belongs to the NanE family.

It catalyses the reaction an N-acyl-D-glucosamine 6-phosphate = an N-acyl-D-mannosamine 6-phosphate. It functions in the pathway amino-sugar metabolism; N-acetylneuraminate degradation; D-fructose 6-phosphate from N-acetylneuraminate: step 3/5. In terms of biological role, converts N-acetylmannosamine-6-phosphate (ManNAc-6-P) to N-acetylglucosamine-6-phosphate (GlcNAc-6-P). The chain is Putative N-acetylmannosamine-6-phosphate 2-epimerase from Mycoplasma capricolum subsp. capricolum (strain California kid / ATCC 27343 / NCTC 10154).